A 251-amino-acid polypeptide reads, in one-letter code: Pyrroloquinoline-quinone synthase (251 aa).

It belongs to the PqqC family.

The catalysed reaction is 6-(2-amino-2-carboxyethyl)-7,8-dioxo-1,2,3,4,7,8-hexahydroquinoline-2,4-dicarboxylate + 3 O2 = pyrroloquinoline quinone + 2 H2O2 + 2 H2O + H(+). The protein operates within cofactor biosynthesis; pyrroloquinoline quinone biosynthesis. Ring cyclization and eight-electron oxidation of 3a-(2-amino-2-carboxyethyl)-4,5-dioxo-4,5,6,7,8,9-hexahydroquinoline-7,9-dicarboxylic-acid to PQQ. The polypeptide is Pyrroloquinoline-quinone synthase (Pseudomonas entomophila (strain L48)).